The following is a 140-amino-acid chain: Large-conductance mechanosensitive channel (140 aa).

Helical transmembrane passes span 16–36 and 84–104; these read VIDLAVGVVIGAAFGKIVTAL and INTVVQFVIIAFAIFLLVKLI.

Belongs to the MscL family. As to quaternary structure, homopentamer.

It is found in the cell inner membrane. Channel that opens in response to stretch forces in the membrane lipid bilayer. May participate in the regulation of osmotic pressure changes within the cell. This chain is Large-conductance mechanosensitive channel, found in Xanthomonas oryzae pv. oryzae (strain PXO99A).